Consider the following 37-residue polypeptide: Large ribosomal subunit protein bL36 (37 aa).

The protein belongs to the bacterial ribosomal protein bL36 family.

The sequence is that of Large ribosomal subunit protein bL36 from Staphylococcus carnosus (strain TM300).